Reading from the N-terminus, the 804-residue chain is Enhancer of polycomb homolog 2 (804 aa).

Disordered regions lie at residues 372–395 (QSSD…ENDP), 484–508 (GFSS…DRHC), 603–624 (QSQQ…SDCM), and 646–669 (PVRS…VQPS). 2 stretches are compositionally biased toward polar residues: residues 611–624 (SHPK…SDCM) and 654–669 (DQNA…VQPS).

It belongs to the enhancer of polycomb family.

It localises to the nucleus. Functionally, may play a role in transcription or DNA repair. This Xenopus laevis (African clawed frog) protein is Enhancer of polycomb homolog 2 (epc2).